Consider the following 327-residue polypeptide: GMP reductase (327 aa).

Residue Cys-176 is the Thioimidate intermediate of the active site. 205–228 (IIADGGIRTHGDIVKSIRFGATMV) is a binding site for NADP(+).

It belongs to the IMPDH/GMPR family. GuaC type 2 subfamily.

The enzyme catalyses IMP + NH4(+) + NADP(+) = GMP + NADPH + 2 H(+). Catalyzes the irreversible NADPH-dependent deamination of GMP to IMP. It functions in the conversion of nucleobase, nucleoside and nucleotide derivatives of G to A nucleotides, and in maintaining the intracellular balance of A and G nucleotides. This is GMP reductase from Helicobacter pylori (strain ATCC 700392 / 26695) (Campylobacter pylori).